Reading from the N-terminus, the 257-residue chain is Imidazole glycerol phosphate synthase subunit HisF (257 aa).

Catalysis depends on residues D11 and D130.

It belongs to the HisA/HisF family. In terms of assembly, heterodimer of HisH and HisF.

The protein localises to the cytoplasm. The enzyme catalyses 5-[(5-phospho-1-deoxy-D-ribulos-1-ylimino)methylamino]-1-(5-phospho-beta-D-ribosyl)imidazole-4-carboxamide + L-glutamine = D-erythro-1-(imidazol-4-yl)glycerol 3-phosphate + 5-amino-1-(5-phospho-beta-D-ribosyl)imidazole-4-carboxamide + L-glutamate + H(+). It functions in the pathway amino-acid biosynthesis; L-histidine biosynthesis; L-histidine from 5-phospho-alpha-D-ribose 1-diphosphate: step 5/9. Its function is as follows. IGPS catalyzes the conversion of PRFAR and glutamine to IGP, AICAR and glutamate. The HisF subunit catalyzes the cyclization activity that produces IGP and AICAR from PRFAR using the ammonia provided by the HisH subunit. This Shewanella baltica (strain OS155 / ATCC BAA-1091) protein is Imidazole glycerol phosphate synthase subunit HisF.